The following is a 305-amino-acid chain: Glutaminase (305 aa).

Substrate-binding residues include S61, N113, E158, N165, Y189, Y241, and V259.

It belongs to the glutaminase family. In terms of assembly, homotetramer.

The catalysed reaction is L-glutamine + H2O = L-glutamate + NH4(+). The sequence is that of Glutaminase from Clostridium botulinum (strain Kyoto / Type A2).